The chain runs to 124 residues: UPF0102 protein Mmc1_3298 (124 aa).

Belongs to the UPF0102 family.

The chain is UPF0102 protein Mmc1_3298 from Magnetococcus marinus (strain ATCC BAA-1437 / JCM 17883 / MC-1).